A 414-amino-acid polypeptide reads, in one-letter code: Dual-specificity RNA methyltransferase RlmN (414 aa).

The active-site Proton acceptor is glutamate 127. The Radical SAM core domain occupies glycine 133–aspartate 380. Cysteine 140 and cysteine 385 are oxidised to a cystine. Positions 147, 151, and 154 each coordinate [4Fe-4S] cluster. S-adenosyl-L-methionine-binding positions include glycine 211–glutamate 212, serine 243, serine 265–histidine 267, and asparagine 342. The active-site S-methylcysteine intermediate is the cysteine 385.

This sequence belongs to the radical SAM superfamily. RlmN family. The cofactor is [4Fe-4S] cluster.

It is found in the cytoplasm. It catalyses the reaction adenosine(2503) in 23S rRNA + 2 reduced [2Fe-2S]-[ferredoxin] + 2 S-adenosyl-L-methionine = 2-methyladenosine(2503) in 23S rRNA + 5'-deoxyadenosine + L-methionine + 2 oxidized [2Fe-2S]-[ferredoxin] + S-adenosyl-L-homocysteine. It carries out the reaction adenosine(37) in tRNA + 2 reduced [2Fe-2S]-[ferredoxin] + 2 S-adenosyl-L-methionine = 2-methyladenosine(37) in tRNA + 5'-deoxyadenosine + L-methionine + 2 oxidized [2Fe-2S]-[ferredoxin] + S-adenosyl-L-homocysteine. In terms of biological role, specifically methylates position 2 of adenine 2503 in 23S rRNA and position 2 of adenine 37 in tRNAs. m2A2503 modification seems to play a crucial role in the proofreading step occurring at the peptidyl transferase center and thus would serve to optimize ribosomal fidelity. The polypeptide is Dual-specificity RNA methyltransferase RlmN (Bartonella bacilliformis (strain ATCC 35685 / KC583 / Herrer 020/F12,63)).